A 177-amino-acid chain; its full sequence is von Ebner gland protein 1 (177 aa).

Positions 1–18 (MKALLLTFGLSLLAALQA) are cleaved as a signal peptide. A disulfide bridge connects residues Cys80 and Cys172.

The protein belongs to the calycin superfamily. Lipocalin family. In terms of assembly, homodimer.

It is found in the secreted. In terms of biological role, could play a role in taste reception. Could be necessary for the concentration and delivery of sapid molecules in the gustatory system. The polypeptide is von Ebner gland protein 1 (Vegp1) (Rattus norvegicus (Rat)).